The following is a 178-amino-acid chain: Protein GrpE (178 aa).

Residues 1 to 11 (MSENQNPPPSP) are compositionally biased toward pro residues. The interval 1 to 23 (MSENQNPPPSPEEIEAAMSANAA) is disordered.

The protein belongs to the GrpE family. Homodimer.

It localises to the cytoplasm. Functionally, participates actively in the response to hyperosmotic and heat shock by preventing the aggregation of stress-denatured proteins, in association with DnaK and GrpE. It is the nucleotide exchange factor for DnaK and may function as a thermosensor. Unfolded proteins bind initially to DnaJ; upon interaction with the DnaJ-bound protein, DnaK hydrolyzes its bound ATP, resulting in the formation of a stable complex. GrpE releases ADP from DnaK; ATP binding to DnaK triggers the release of the substrate protein, thus completing the reaction cycle. Several rounds of ATP-dependent interactions between DnaJ, DnaK and GrpE are required for fully efficient folding. In Acidovorax sp. (strain JS42), this protein is Protein GrpE.